Reading from the N-terminus, the 344-residue chain is Methionine import ATP-binding protein MetN (344 aa).

The region spanning 2–241 (IEINRVNKVF…PKTELARKFI (240 aa)) is the ABC transporter domain. 38–45 (GSSGAGKS) is an ATP binding site.

Belongs to the ABC transporter superfamily. Methionine importer (TC 3.A.1.24) family. As to quaternary structure, the complex is composed of two ATP-binding proteins (MetN), two transmembrane proteins (MetI) and a solute-binding protein (MetQ).

The protein resides in the cell inner membrane. The catalysed reaction is L-methionine(out) + ATP + H2O = L-methionine(in) + ADP + phosphate + H(+). The enzyme catalyses D-methionine(out) + ATP + H2O = D-methionine(in) + ADP + phosphate + H(+). Part of the ABC transporter complex MetNIQ involved in methionine import. Responsible for energy coupling to the transport system. The protein is Methionine import ATP-binding protein MetN of Photobacterium profundum (strain SS9).